A 105-amino-acid chain; its full sequence is Platelet factor 4 (105 aa).

Residues 1–29 (MSAAAVFRGLRPSPELLLLGLLLLPAVVA) form the signal peptide. Threonine 31 is a glycosylation site (O-linked (GalNAc...) threonine; partial). Cystine bridges form between cysteine 44–cysteine 71 and cysteine 46–cysteine 87. At serine 61 the chain carries Phosphoserine. 96-102 (KKIIKKL) is a heparin binding site.

It belongs to the intercrine alpha (chemokine CxC) family. Homotetramer. Interacts with TNFAIP6 (via Link domain). Interacts with CCR1. Interacts with CXCR3. Interacts with THBD; this interaction enhances generation of activated protein C. Post-translationally, O-linked glycan consists of Gal-GalNAc disaccharide which is modified with sialic acid residues (microheterogeneity).

It localises to the secreted. In terms of biological role, chemokine released during platelet aggregation that plays a role in different biological processes including hematopoiesis, cell proliferation, differentiation, and activation. Acts via different functional receptors including CCR1, CXCR3A or CXCR3B. Upon interaction with CXCR3A receptor, induces activated T-lymphocytes migration mediated via downstream Ras/extracellular signal-regulated kinase (ERK) signaling. Neutralizes the anticoagulant effect of heparin by binding more strongly to heparin than to the chondroitin-4-sulfate chains of the carrier molecule. Plays a role in the inhibition of hematopoiesis and in the maintenance of hematopoietic stem cell (HSC) quiescence. Chemotactic for neutrophils and monocytes via CCR1. Inhibits endothelial cell proliferation. In cooperation with toll-like receptor 8/TLR8, induces chromatin remodeling and activates inflammatory gene expression via the TBK1-IRF5 axis. In addition, induces myofibroblast differentiation and collagen synthesis in different precursor cells, including endothelial cells, by stimulating endothelial-to-mesenchymal transition. Interacts with thrombomodulin/THBD to enhance the activation of protein C and thus potentiates its anticoagulant activity. The chain is Platelet factor 4 (Pf4) from Rattus norvegicus (Rat).